The chain runs to 438 residues: UDP-N-acetylmuramoylalanine--D-glutamate ligase (438 aa).

112 to 118 (GSNGKST) lines the ATP pocket.

The protein belongs to the MurCDEF family.

The protein localises to the cytoplasm. The enzyme catalyses UDP-N-acetyl-alpha-D-muramoyl-L-alanine + D-glutamate + ATP = UDP-N-acetyl-alpha-D-muramoyl-L-alanyl-D-glutamate + ADP + phosphate + H(+). The protein operates within cell wall biogenesis; peptidoglycan biosynthesis. Its function is as follows. Cell wall formation. Catalyzes the addition of glutamate to the nucleotide precursor UDP-N-acetylmuramoyl-L-alanine (UMA). The chain is UDP-N-acetylmuramoylalanine--D-glutamate ligase from Yersinia pseudotuberculosis serotype I (strain IP32953).